The primary structure comprises 267 residues: Tryptophan synthase alpha chain (267 aa).

Catalysis depends on proton acceptor residues E47 and D58.

The protein belongs to the TrpA family. Tetramer of two alpha and two beta chains.

The enzyme catalyses (1S,2R)-1-C-(indol-3-yl)glycerol 3-phosphate + L-serine = D-glyceraldehyde 3-phosphate + L-tryptophan + H2O. The protein operates within amino-acid biosynthesis; L-tryptophan biosynthesis; L-tryptophan from chorismate: step 5/5. The alpha subunit is responsible for the aldol cleavage of indoleglycerol phosphate to indole and glyceraldehyde 3-phosphate. This chain is Tryptophan synthase alpha chain, found in Chlorobium limicola (strain DSM 245 / NBRC 103803 / 6330).